The following is a 512-amino-acid chain: MEEFKGYLEKGGFKQQHFLYPLLFQEYIYALAYDQGLNVNASTFNEPVEISGYDKKYSSLLVKRLIKRLYQQNSLIHSVNNAKQNRFVGHNKNFYYQMISEGFSIVVEIPFSLRLISSLKEKKEIPKYQNLRSIHSIFSFLEDKFAHLNYISDILIPYPVHLEKLIQILQCWIQDVPTLHLLRLFFHDYHNWSNDITITTNKSTYGFSKDNARLYRFLYNSYVVECESIFVFLRKSSSYLQSTSFGPLLERTHFYGKMKDIGIISCNDFQKPLGLFKDPFMHYVRYQGKSIIASRGTHLLLKKWKSYFLNLWQCHFHFWSQPSRIHINQFAHFSFYFLGYLSSVEMNPSSMKSQMLENSFLIDTVTPKFQTLIAIIPMIGSLARAKFCNLSGNPISKPVWTDLSDSEIIDRFGRLCRNISHYYSGSSKKQSLYRIKYILRLSCARTLARKHKTTVRTFLQRLGSEFFEEFFMEEEKVLSLMLARTSYPLHQLYREPIWYLDIIRINDLVNHL.

It belongs to the intron maturase 2 family. MatK subfamily.

Its subcellular location is the plastid. It is found in the chloroplast. In terms of biological role, usually encoded in the trnK tRNA gene intron. Probably assists in splicing its own and other chloroplast group II introns. The polypeptide is Maturase K (Wolffiella gladiata (Florida mud-midget)).